Here is a 380-residue protein sequence, read N- to C-terminus: uncharacterized protein (380 aa).

Positions 251–275 (NMSERPPTPSHDTASSSTSTDPNPL) are disordered. A compositionally biased stretch (low complexity) spans 260–272 (SHDTASSSTSTDP).

This is an uncharacterized protein from Allium cepa var. aggregatum (Shallot).